We begin with the raw amino-acid sequence, 243 residues long: Nuclear protein UL4 homolog (243 aa).

Positions 193–226 (RPDDQTTPTPTPHQYTSQRRQPETNCPSPQPAFF) are disordered. A compositionally biased stretch (polar residues) spans 205–219 (HQYTSQRRQPETNCP).

The protein belongs to the alphaherpesvirinae HHV-1 UL4 family.

It is found in the host nucleus. The polypeptide is Nuclear protein UL4 homolog (Varicella-zoster virus (strain Oka vaccine) (HHV-3)).